Here is a 365-residue protein sequence, read N- to C-terminus: GDSL esterase/lipase At3g62280 (365 aa).

Residues Met1–Ser25 form the signal peptide. The Nucleophile role is filled by Ser43. Residues Asn137, Asn178, and Asn231 are each glycosylated (N-linked (GlcNAc...) asparagine). Residues Asp333 and His336 contribute to the active site.

This sequence belongs to the 'GDSL' lipolytic enzyme family.

Its subcellular location is the secreted. The chain is GDSL esterase/lipase At3g62280 from Arabidopsis thaliana (Mouse-ear cress).